A 192-amino-acid chain; its full sequence is Glycerol-3-phosphate acyltransferase (192 aa).

A run of 5 helical transmembrane segments spans residues alanine 3–alanine 23, tyrosine 51–valine 71, valine 80–phenylalanine 100, valine 112–phenylalanine 132, and alanine 149–isoleucine 169.

This sequence belongs to the PlsY family. As to quaternary structure, probably interacts with PlsX.

The protein resides in the cell inner membrane. The enzyme catalyses an acyl phosphate + sn-glycerol 3-phosphate = a 1-acyl-sn-glycero-3-phosphate + phosphate. It functions in the pathway lipid metabolism; phospholipid metabolism. In terms of biological role, catalyzes the transfer of an acyl group from acyl-phosphate (acyl-PO(4)) to glycerol-3-phosphate (G3P) to form lysophosphatidic acid (LPA). This enzyme utilizes acyl-phosphate as fatty acyl donor, but not acyl-CoA or acyl-ACP. This Aquifex aeolicus (strain VF5) protein is Glycerol-3-phosphate acyltransferase.